The chain runs to 316 residues: PHD finger protein 20-like protein 1 (316 aa).

Residues 11–71 (ITFEIGARLE…SNRLRPLERP (61 aa)) form the Tudor 1 domain. Glycyl lysine isopeptide (Lys-Gly) (interchain with G-Cter in SUMO2) cross-links involve residues K75 and K79. A Tudor 2 domain is found at 85–141 (FDFKAGEEVLARWTDCRYYPAKIEAINKEGTFTVQFYDGVIRCLKRMHIKAMPEDAK). The tract at residues 183 to 237 (AKNKTGNKPRTSANSNKDKEKDERKWFKVPSKKEETSTSITTPEVEKKEDLPTSS) is disordered. Positions 186-197 (KTGNKPRTSANS) are enriched in polar residues. Basic and acidic residues predominate over residues 198-218 (NKDKEKDERKWFKVPSKKEET).

Interacts with methylated DNMT1 (DNMT1K142me1). Interacts with SOX2.

It localises to the nucleus. Functionally, is a negative regulator of proteasomal degradation of a set of methylated proteins, including DNMT1 and SOX2. Involved in the maintainance of embryonic stem cells pluripotency, through the regulation of SOX2 levels. This is PHD finger protein 20-like protein 1 (PHF20L1) from Bos taurus (Bovine).